Here is a 232-residue protein sequence, read N- to C-terminus: Thiamine import ATP-binding protein ThiQ (232 aa).

One can recognise an ABC transporter domain in the interval 2–230; sequence LKLTDITWLY…KASASAILGI (229 aa). 32 to 39 contacts ATP; it reads GPSGAGKS.

The protein belongs to the ABC transporter superfamily. Thiamine importer (TC 3.A.1.19.1) family. As to quaternary structure, the complex is composed of two ATP-binding proteins (ThiQ), two transmembrane proteins (ThiP) and a solute-binding protein (ThiB).

It localises to the cell inner membrane. The catalysed reaction is thiamine(out) + ATP + H2O = thiamine(in) + ADP + phosphate + H(+). Functionally, part of the ABC transporter complex ThiBPQ involved in thiamine import. Responsible for energy coupling to the transport system. The polypeptide is Thiamine import ATP-binding protein ThiQ (Shigella boydii serotype 4 (strain Sb227)).